A 145-amino-acid chain; its full sequence is Phosphoribosyl-AMP cyclohydrolase (145 aa).

Residue aspartate 87 coordinates Mg(2+). Cysteine 88 contributes to the Zn(2+) binding site. Residues aspartate 89 and aspartate 91 each coordinate Mg(2+). Positions 104 and 111 each coordinate Zn(2+).

The protein belongs to the PRA-CH family. As to quaternary structure, homodimer. Mg(2+) is required as a cofactor. Requires Zn(2+) as cofactor.

It localises to the cytoplasm. It carries out the reaction 1-(5-phospho-beta-D-ribosyl)-5'-AMP + H2O = 1-(5-phospho-beta-D-ribosyl)-5-[(5-phospho-beta-D-ribosylamino)methylideneamino]imidazole-4-carboxamide. It participates in amino-acid biosynthesis; L-histidine biosynthesis; L-histidine from 5-phospho-alpha-D-ribose 1-diphosphate: step 3/9. Catalyzes the hydrolysis of the adenine ring of phosphoribosyl-AMP. The protein is Phosphoribosyl-AMP cyclohydrolase of Nitrobacter winogradskyi (strain ATCC 25391 / DSM 10237 / CIP 104748 / NCIMB 11846 / Nb-255).